Reading from the N-terminus, the 170-residue chain is Transcription factor E (170 aa).

The HTH TFE/IIEalpha-type domain maps to 1–93; sequence MKDAYLYVVE…AWYVDDEIIR (93 aa).

Belongs to the TFE family. As to quaternary structure, monomer. Interaction with RNA polymerase subunits RpoF and RpoE is necessary for Tfe stimulatory transcription activity. Able to interact with Tbp and RNA polymerase in the absence of DNA promoter. Interacts both with the preinitiation and elongation complexes.

Functionally, transcription factor that plays a role in the activation of archaeal genes transcribed by RNA polymerase. Facilitates transcription initiation by enhancing TATA-box recognition by TATA-box-binding protein (Tbp), and transcription factor B (Tfb) and RNA polymerase recruitment. Not absolutely required for transcription in vitro, but particularly important in cases where Tbp or Tfb function is not optimal. It dynamically alters the nucleic acid-binding properties of RNA polymerases by stabilizing the initiation complex and destabilizing elongation complexes. Seems to translocate with the RNA polymerase following initiation and acts by binding to the non template strand of the transcription bubble in elongation complexes. The sequence is that of Transcription factor E from Pyrobaculum arsenaticum (strain DSM 13514 / JCM 11321 / PZ6).